Here is a 120-residue protein sequence, read N- to C-terminus: Inner membrane protein YidG (120 aa).

Topologically, residues 1-21 (MPDSRKARRIADPGLQPERTS) are cytoplasmic. A helical membrane pass occupies residues 22-39 (LAWFRTMLGYGALMALAI). Residues 40 to 48 (KHNWHQAGM) lie on the Periplasmic side of the membrane. A helical transmembrane segment spans residues 49–68 (LFWISIGILAIVALILWHYT). The Cytoplasmic portion of the chain corresponds to 69-90 (RNRNLMDVTNSDFSQFHVVRDK). The helical transmembrane segment at 91–113 (FLISLAVLSLAILFAVTHIHQLI) threads the bilayer. At 114–120 (VFIERVA) the chain is on the periplasmic side.

It is found in the cell inner membrane. The chain is Inner membrane protein YidG (yidG) from Escherichia coli O157:H7.